The chain runs to 318 residues: Acetyl-coenzyme A carboxylase carboxyl transferase subunit alpha (318 aa).

In terms of domain architecture, CoA carboxyltransferase C-terminal spans 38–292 (KLEKRLAKLE…NKTITKSLHA (255 aa)).

Belongs to the AccA family. In terms of assembly, acetyl-CoA carboxylase is a heterohexamer composed of biotin carboxyl carrier protein (AccB), biotin carboxylase (AccC) and two subunits each of ACCase subunit alpha (AccA) and ACCase subunit beta (AccD).

Its subcellular location is the cytoplasm. It carries out the reaction N(6)-carboxybiotinyl-L-lysyl-[protein] + acetyl-CoA = N(6)-biotinyl-L-lysyl-[protein] + malonyl-CoA. Its pathway is lipid metabolism; malonyl-CoA biosynthesis; malonyl-CoA from acetyl-CoA: step 1/1. In terms of biological role, component of the acetyl coenzyme A carboxylase (ACC) complex. First, biotin carboxylase catalyzes the carboxylation of biotin on its carrier protein (BCCP) and then the CO(2) group is transferred by the carboxyltransferase to acetyl-CoA to form malonyl-CoA. In Listeria welshimeri serovar 6b (strain ATCC 35897 / DSM 20650 / CCUG 15529 / CIP 8149 / NCTC 11857 / SLCC 5334 / V8), this protein is Acetyl-coenzyme A carboxylase carboxyl transferase subunit alpha.